The primary structure comprises 478 residues: 3-isopropylmalate dehydratase large subunit (478 aa).

[4Fe-4S] cluster-binding residues include C359, C417, and C420.

This sequence belongs to the aconitase/IPM isomerase family. LeuC type 1 subfamily. Heterodimer of LeuC and LeuD. [4Fe-4S] cluster is required as a cofactor.

It catalyses the reaction (2R,3S)-3-isopropylmalate = (2S)-2-isopropylmalate. Its pathway is amino-acid biosynthesis; L-leucine biosynthesis; L-leucine from 3-methyl-2-oxobutanoate: step 2/4. Catalyzes the isomerization between 2-isopropylmalate and 3-isopropylmalate, via the formation of 2-isopropylmaleate. In Anaeromyxobacter sp. (strain Fw109-5), this protein is 3-isopropylmalate dehydratase large subunit.